The sequence spans 369 residues: Porin-like protein BUsg_347 (369 aa).

A signal peptide spans 1–23 (MKNHKSLAILIPMLFAGSTAVNA).

The protein belongs to the Gram-negative porin family. In terms of assembly, homotrimer.

It is found in the cell outer membrane. Forms pores that allow passive diffusion of small molecules across the membrane. This chain is Porin-like protein BUsg_347, found in Buchnera aphidicola subsp. Schizaphis graminum (strain Sg).